A 435-amino-acid polypeptide reads, in one-letter code: ATP-dependent protease ATPase subunit HslU (435 aa).

Residues Val-18, 60-65 (GVGKTE), Asp-248, Glu-313, and Arg-385 contribute to the ATP site.

It belongs to the ClpX chaperone family. HslU subfamily. As to quaternary structure, a double ring-shaped homohexamer of HslV is capped on each side by a ring-shaped HslU homohexamer. The assembly of the HslU/HslV complex is dependent on binding of ATP.

Its subcellular location is the cytoplasm. Functionally, ATPase subunit of a proteasome-like degradation complex; this subunit has chaperone activity. The binding of ATP and its subsequent hydrolysis by HslU are essential for unfolding of protein substrates subsequently hydrolyzed by HslV. HslU recognizes the N-terminal part of its protein substrates and unfolds these before they are guided to HslV for hydrolysis. The chain is ATP-dependent protease ATPase subunit HslU from Rhodospirillum rubrum (strain ATCC 11170 / ATH 1.1.1 / DSM 467 / LMG 4362 / NCIMB 8255 / S1).